We begin with the raw amino-acid sequence, 97 residues long: uncharacterized protein (97 aa).

The protein to M.thermoautotrophicum MTH1236.

This is an uncharacterized protein from Methanocaldococcus jannaschii (strain ATCC 43067 / DSM 2661 / JAL-1 / JCM 10045 / NBRC 100440) (Methanococcus jannaschii).